The primary structure comprises 136 residues: Ribosome-binding factor A (136 aa).

The interval 114–136 (DRANRPGPAADEPDEPDEPEDRR) is disordered. Residues 124 to 136 (DEPDEPDEPEDRR) are compositionally biased toward acidic residues.

Belongs to the RbfA family. Monomer. Binds 30S ribosomal subunits, but not 50S ribosomal subunits or 70S ribosomes.

The protein resides in the cytoplasm. One of several proteins that assist in the late maturation steps of the functional core of the 30S ribosomal subunit. Associates with free 30S ribosomal subunits (but not with 30S subunits that are part of 70S ribosomes or polysomes). Required for efficient processing of 16S rRNA. May interact with the 5'-terminal helix region of 16S rRNA. The chain is Ribosome-binding factor A from Bordetella petrii (strain ATCC BAA-461 / DSM 12804 / CCUG 43448).